The following is a 98-amino-acid chain: uncharacterized protein (98 aa).

The first 23 residues, 1–23 (MKKMQSIVLALSLVLVAPMAAQA), serve as a signal peptide directing secretion. Residues 68-98 (WHLHGPPPPPRHHKKAPHDHHGGHGPGKHHR) form a disordered region. Residues 77-98 (PRHHKKAPHDHHGGHGPGKHHR) are compositionally biased toward basic residues.

To E.coli YpeC.

This is an uncharacterized protein from Escherichia coli (strain K12).